The following is a 1034-amino-acid chain: Presequence protease, mitochondrial (1034 aa).

A mitochondrion-targeting transit peptide spans 1-29 (MLKGGMLSRWKMWSPQYKILRNHLINFKS). His-128 is a binding site for Zn(2+). Glu-131 (proton acceptor) is an active-site residue. Zn(2+) contacts are provided by His-132 and Glu-229.

This sequence belongs to the peptidase M16 family. PreP subfamily. In terms of assembly, homodimer. It depends on Zn(2+) as a cofactor.

It localises to the mitochondrion. Functionally, ATP-independent protease that degrades mitochondrial transit peptides after their cleavage. Also degrades other unstructured peptides. The protein is Presequence protease, mitochondrial of Drosophila melanogaster (Fruit fly).